Reading from the N-terminus, the 72-residue chain is Translation initiation factor IF-1 (72 aa).

An S1-like domain is found at 1–72 (MSKDDVIEMQ…TRGRITWRAK (72 aa)).

It belongs to the IF-1 family. Component of the 30S ribosomal translation pre-initiation complex which assembles on the 30S ribosome in the order IF-2 and IF-3, IF-1 and N-formylmethionyl-tRNA(fMet); mRNA recruitment can occur at any time during PIC assembly.

The protein resides in the cytoplasm. In terms of biological role, one of the essential components for the initiation of protein synthesis. Stabilizes the binding of IF-2 and IF-3 on the 30S subunit to which N-formylmethionyl-tRNA(fMet) subsequently binds. Helps modulate mRNA selection, yielding the 30S pre-initiation complex (PIC). Upon addition of the 50S ribosomal subunit IF-1, IF-2 and IF-3 are released leaving the mature 70S translation initiation complex. This chain is Translation initiation factor IF-1, found in Clostridium botulinum (strain ATCC 19397 / Type A).